The primary structure comprises 151 residues: UPF0178 protein Hhal_1913 (151 aa).

The protein belongs to the UPF0178 family.

The polypeptide is UPF0178 protein Hhal_1913 (Halorhodospira halophila (strain DSM 244 / SL1) (Ectothiorhodospira halophila (strain DSM 244 / SL1))).